A 634-amino-acid polypeptide reads, in one-letter code: Nicotinic receptor-associated protein 1 (634 aa).

C2 domains lie at 1 to 141 (MNQP…KAHL) and 159 to 295 (KTGS…EILL). Ca(2+)-binding residues include leucine 29, aspartate 30, aspartate 36, aspartate 105, aspartate 107, aspartate 119, aspartate 189, aspartate 195, aspartate 251, aspartate 253, and aspartate 271. In terms of domain architecture, VWFA spans 338–557 (DFAVAVDFTA…LDPDVIQENL (220 aa)). Positions 576–603 (RGFQPRPVDDPWRRDSPPPEFDPILDGT) are disordered. Over residues 582 to 592 (PVDDPWRRDSP) the composition is skewed to basic and acidic residues.

It belongs to the copine family. As to quaternary structure, interacts with nicotinic acetylcholine receptor. Requires Ca(2+) as cofactor. Expressed in head and tail neurons, ventral cord moto-neurons, body wall muscles and hypodermal cells of the vulva.

Its subcellular location is the cell membrane. Exhibits calcium-dependent phospholipid binding properties. May function in membrane trafficking. Regulates synaptic levels of nicotinic acetylcholine receptor subunit lev-1 and unc-38 in the nerve cord. Involved in nicotinic acetylcholine receptor (nAChR)-mediated sensitivity to nicotine and levamisole. Affects directional sperm motility. This is Nicotinic receptor-associated protein 1 (nra-1) from Caenorhabditis elegans.